The chain runs to 259 residues: Phosphatidylglycerol--prolipoprotein diacylglyceryl transferase (259 aa).

4 helical membrane passes run 9 to 29 (IIFY…VVGI), 55 to 75 (FITY…VLLY), 92 to 112 (EGGM…YLFC), and 117 to 137 (VNFL…LFLG). Position 138 (Arg-138) interacts with a 1,2-diacyl-sn-glycero-3-phospho-(1'-sn-glycerol). Transmembrane regions (helical) follow at residues 172–192 (QLYE…YATF), 201–221 (GLNS…IEIF), and 228–248 (IGFI…MLIL).

This sequence belongs to the Lgt family.

It localises to the cell inner membrane. The enzyme catalyses L-cysteinyl-[prolipoprotein] + a 1,2-diacyl-sn-glycero-3-phospho-(1'-sn-glycerol) = an S-1,2-diacyl-sn-glyceryl-L-cysteinyl-[prolipoprotein] + sn-glycerol 1-phosphate + H(+). It functions in the pathway protein modification; lipoprotein biosynthesis (diacylglyceryl transfer). In terms of biological role, catalyzes the transfer of the diacylglyceryl group from phosphatidylglycerol to the sulfhydryl group of the N-terminal cysteine of a prolipoprotein, the first step in the formation of mature lipoproteins. The chain is Phosphatidylglycerol--prolipoprotein diacylglyceryl transferase from Rickettsia akari (strain Hartford).